We begin with the raw amino-acid sequence, 384 residues long: Putative dioxygenase SSO1533 (384 aa).

Fe cation is bound by residues histidine 296, glutamate 302, and histidine 332.

The protein belongs to the homogentisate dioxygenase family. It depends on Fe cation as a cofactor.

The polypeptide is Putative dioxygenase SSO1533 (Saccharolobus solfataricus (strain ATCC 35092 / DSM 1617 / JCM 11322 / P2) (Sulfolobus solfataricus)).